The following is a 119-amino-acid chain: Large ribosomal subunit protein uL18 (119 aa).

Belongs to the universal ribosomal protein uL18 family. In terms of assembly, part of the 50S ribosomal subunit; part of the 5S rRNA/L5/L18/L25 subcomplex. Contacts the 5S and 23S rRNAs.

This is one of the proteins that bind and probably mediate the attachment of the 5S RNA into the large ribosomal subunit, where it forms part of the central protuberance. In Clostridium beijerinckii (strain ATCC 51743 / NCIMB 8052) (Clostridium acetobutylicum), this protein is Large ribosomal subunit protein uL18.